The primary structure comprises 324 residues: NADH-cytochrome b5 reductase 1 (324 aa).

Residues 49–69 (LNIVLAFVVGLIGSVVVLLYF) form a helical membrane-spanning segment. One can recognise an FAD-binding FR-type domain in the interval 81-184 (TQWQQYRLME…KGPKGQMRYA (104 aa)). FAD is bound by residues 164-179 (GSMK…GPKG) and 190-222 (HIGM…QIDF).

It belongs to the flavoprotein pyridine nucleotide cytochrome reductase family. As to quaternary structure, monomer. Component of the 2-(3-amino-3-carboxypropyl)histidine synthase complex composed of DPH1, DPH2, DPH3 and a NADH-dependent reductase, predominantly CBR1. FAD is required as a cofactor.

It localises to the mitochondrion outer membrane. The enzyme catalyses 2 Fe(III)-[cytochrome b5] + NADH = 2 Fe(II)-[cytochrome b5] + NAD(+) + H(+). It catalyses the reaction 2 Fe(3+)-[Dph3] + NADH = 2 Fe(2+)-[Dph3] + NAD(+) + H(+). Its pathway is protein modification; peptidyl-diphthamide biosynthesis. In terms of biological role, NADH-dependent reductase for DPH3 and cytochrome b5. Required for the first step of diphthamide biosynthesis, a post-translational modification of histidine which occurs in elongation factor 2. DPH1 and DPH2 transfer a 3-amino-3-carboxypropyl (ACP) group from S-adenosyl-L-methionine (SAM) to a histidine residue, the reaction is assisted by a reduction system comprising DPH3 and a NADH-dependent reductase, predominantly CBR1. By reducing DPH3, also involved in the formation of the tRNA wobble base modification mcm5s 2U (5-methoxycarbonylmethyl-2-thiouridine), mediated by the elongator complex. The cytochrome b5/NADH cytochrome b5 reductase electron transfer system supports the catalytic activity of several sterol biosynthetic enzymes. This is NADH-cytochrome b5 reductase 1 (CBR1) from Mycosarcoma maydis (Corn smut fungus).